The sequence spans 434 residues: Enolase (434 aa).

Gln-167 is a (2R)-2-phosphoglycerate binding site. The Proton donor role is filled by Glu-209. The Mg(2+) site is built by Asp-246, Glu-291, and Asp-318. (2R)-2-phosphoglycerate is bound by residues Lys-343, Arg-372, Ser-373, and Lys-394. Lys-343 acts as the Proton acceptor in catalysis.

It belongs to the enolase family. As to quaternary structure, component of the RNA degradosome, a multiprotein complex involved in RNA processing and mRNA degradation. Requires Mg(2+) as cofactor.

The protein localises to the cytoplasm. Its subcellular location is the secreted. It is found in the cell surface. The enzyme catalyses (2R)-2-phosphoglycerate = phosphoenolpyruvate + H2O. Its pathway is carbohydrate degradation; glycolysis; pyruvate from D-glyceraldehyde 3-phosphate: step 4/5. Its function is as follows. Catalyzes the reversible conversion of 2-phosphoglycerate (2-PG) into phosphoenolpyruvate (PEP). It is essential for the degradation of carbohydrates via glycolysis. In Buchnera aphidicola subsp. Schizaphis graminum (strain Sg), this protein is Enolase.